A 301-amino-acid chain; its full sequence is Acetylglutamate kinase (301 aa).

Substrate-binding positions include 68 to 69, arginine 90, and asparagine 195; that span reads GG.

This sequence belongs to the acetylglutamate kinase family. ArgB subfamily.

The protein resides in the cytoplasm. The catalysed reaction is N-acetyl-L-glutamate + ATP = N-acetyl-L-glutamyl 5-phosphate + ADP. The protein operates within amino-acid biosynthesis; L-arginine biosynthesis; N(2)-acetyl-L-ornithine from L-glutamate: step 2/4. Its function is as follows. Catalyzes the ATP-dependent phosphorylation of N-acetyl-L-glutamate. This chain is Acetylglutamate kinase, found in Pseudomonas fluorescens (strain SBW25).